A 276-amino-acid chain; its full sequence is Undecaprenyl-diphosphatase 1 (276 aa).

The next 5 membrane-spanning stretches (helical) occupy residues 83–103 (FTLN…LFEK), 108–128 (VLFS…IILW), 187–207 (VATE…TLYE), 217–237 (VDSL…AFVC), and 252–272 (VFAW…YSGW).

This sequence belongs to the UppP family.

Its subcellular location is the cell inner membrane. The enzyme catalyses di-trans,octa-cis-undecaprenyl diphosphate + H2O = di-trans,octa-cis-undecaprenyl phosphate + phosphate + H(+). Catalyzes the dephosphorylation of undecaprenyl diphosphate (UPP). Confers resistance to bacitracin. The protein is Undecaprenyl-diphosphatase 1 of Burkholderia cenocepacia (strain HI2424).